Reading from the N-terminus, the 189-residue chain is MRPTNKRILDAAMQLLVKKGYRATTTKEIAEKANVSEATIFRNFKNKQGLVEALLSQHSSNRGSILEQTEGDLYKDLLHIGTCLLEELEHRKDIIKISFREPAMFQDVINHVTEYPQSMKQLLVDYLKTMGEKGVIQTGNEAEHADVFMSIIFGYFIHRLHLGDRVISMPQEKMLEHSTALFVKGISAD.

Residues 2–62 (RPTNKRILDA…ALLSQHSSNR (61 aa)) enclose the HTH tetR-type domain. Positions 25 to 44 (TTKEIAEKANVSEATIFRNF) form a DNA-binding region, H-T-H motif.

This is an uncharacterized protein from Bacillus subtilis (strain 168).